Reading from the N-terminus, the 384-residue chain is UPF0496 protein At3g28310/At3g28320 (384 aa).

The stretch at 184-215 (QESLFDRVTETKERIAKEIEEVQKRISNVNTA) forms a coiled coil. A run of 2 helical transmembrane segments spans residues 217 to 237 (IVSHVVFGAAAFGYAAGCIAL) and 242 to 262 (VGAPLGAGMVTLLPVIVVQWV). Residues 264–361 (VNYVLNNSLE…TTKITEVCET (98 aa)) adopt a coiled-coil conformation.

Belongs to the UPF0496 family.

It localises to the membrane. In Arabidopsis thaliana (Mouse-ear cress), this protein is UPF0496 protein At3g28310/At3g28320.